Here is a 364-residue protein sequence, read N- to C-terminus: Tyrosine--tRNA ligase (364 aa).

Tyr39 contributes to the L-tyrosine binding site. The ATP site is built by His49 and Trp52. Positions 165, 169, 172, and 187 each coordinate L-tyrosine. The 'KMSKS' region signature appears at 238-242; that stretch reads KMSKS. Lys241 contacts ATP.

This sequence belongs to the class-I aminoacyl-tRNA synthetase family. TyrS type 4 subfamily. Homodimer.

It localises to the cytoplasm. It catalyses the reaction tRNA(Tyr) + L-tyrosine + ATP = L-tyrosyl-tRNA(Tyr) + AMP + diphosphate + H(+). Catalyzes the attachment of tyrosine to tRNA(Tyr) in a two-step reaction: tyrosine is first activated by ATP to form Tyr-AMP and then transferred to the acceptor end of tRNA(Tyr). This is Tyrosine--tRNA ligase from Aeropyrum pernix (strain ATCC 700893 / DSM 11879 / JCM 9820 / NBRC 100138 / K1).